The primary structure comprises 885 residues: Protein transport protein SEC24-1 (885 aa).

4 residues coordinate Zn(2+): Cys-164, Cys-167, Cys-186, and Cys-189. Residues 164-189 form a zinc finger-like region; that stretch reads CRRCRSYLNPFVAFIEQGRRWQCNIC. The interval 296–332 is disordered; it reads DDYEESDDDDDEDDDDEEEDNEEEEEEEEDEEDDDDS.

It belongs to the SEC23/SEC24 family. SEC24 subfamily. As to quaternary structure, the COPII coat is composed of at least 5 proteins: the SEC23/24 complex, the SEC13/31 complex, and the protein SAR1. Golgi apparatus membrane; Peripheral membrane protein; Cytoplasmic side.

It is found in the cytoplasm. It localises to the cytoplasmic vesicle. The protein localises to the COPII-coated vesicle membrane. Its subcellular location is the endoplasmic reticulum membrane. The protein resides in the golgi apparatus membrane. Functionally, component of the coat protein complex II (COPII) which promotes the formation of transport vesicles from the endoplasmic reticulum (ER). The coat has two main functions, the physical deformation of the endoplasmic reticulum membrane into vesicles and the selection of cargo molecules. The sequence is that of Protein transport protein SEC24-1 (SEC241) from Saccharomyces uvarum (strain ATCC 76518 / CBS 7001 / CLIB 283 / NBRC 10550 / MCYC 623 / NCYC 2669 / NRRL Y-11845) (Yeast).